Consider the following 629-residue polypeptide: tRNA uridine 5-carboxymethylaminomethyl modification enzyme MnmG (629 aa).

13–18 serves as a coordination point for FAD; sequence GGGHAG. 273 to 287 is a binding site for NAD(+); sequence GPRYCPSIEDKVMRF.

Belongs to the MnmG family. As to quaternary structure, homodimer. Heterotetramer of two MnmE and two MnmG subunits. FAD is required as a cofactor.

Its subcellular location is the cytoplasm. NAD-binding protein involved in the addition of a carboxymethylaminomethyl (cmnm) group at the wobble position (U34) of certain tRNAs, forming tRNA-cmnm(5)s(2)U34. This chain is tRNA uridine 5-carboxymethylaminomethyl modification enzyme MnmG, found in Photorhabdus laumondii subsp. laumondii (strain DSM 15139 / CIP 105565 / TT01) (Photorhabdus luminescens subsp. laumondii).